The chain runs to 477 residues: MLGVRCLLRSVRFCSSAPFPKHKPSAKLSVRDALGAQNASGERIKIQGWIRSVRSQKEVLFLHVNDGSSLESLQVVADSGLDSRELNFGSSVEVQGQLIKSPSKRQNVELKAEKIKVIGNCDAKDFPIKYKERHPLEYLRQYPHFRCRTNVLGSILRIRSEATAAIHSFFKDSGFVHIHTPIITSNDSEGAGELFQLEPSGKLKVPEENFFNVPAFLTVSGQLHLEVMSGAFTQVFTFGPTFRAENSQSRRHLAEFYMIEAEISFVDSLQDLMQVIEELFKATTMMVLSKCPEDVELCHKFIAPGQKDRLEHMLKNNFLIISYTEAVEILKQASQNFTFTPEWGADLRTEHEKYLVKHCGNIPVFVINYPLTLKPFYMRDNEDGPQHTVAAVDLLVPGVGELFGGGLREERYHFLEERLARSGLTEVYQWYLDLRRFGSVPHGGFGMGFERYLQCILGVDNIKDVIPFPRFPHSCLL.

Residues 1 to 14 constitute a mitochondrion transit peptide; the sequence is MLGVRCLLRSVRFC. N6-acetyllysine is present on Lys353.

The protein belongs to the class-II aminoacyl-tRNA synthetase family. Homodimer.

It localises to the mitochondrion matrix. Its subcellular location is the mitochondrion. It catalyses the reaction tRNA(Asn) + L-asparagine + ATP = L-asparaginyl-tRNA(Asn) + AMP + diphosphate + H(+). Mitochondrial aminoacyl-tRNA synthetase that catalyzes the specific attachment of the asparagine amino acid (aa) to the homologous transfer RNA (tRNA), further participating in protein synthesis. The reaction occurs in a two steps: asparagine is first activated by ATP to form Asn-AMP and then transferred to the acceptor end of tRNA(Asn). This chain is Asparaginyl-tRNA synthetase, found in Homo sapiens (Human).